The sequence spans 214 residues: Large ribosomal subunit protein uL3 (214 aa).

Gln-151 carries the post-translational modification N5-methylglutamine.

The protein belongs to the universal ribosomal protein uL3 family. In terms of assembly, part of the 50S ribosomal subunit. Forms a cluster with proteins L14 and L19. In terms of processing, methylated by PrmB.

Its function is as follows. One of the primary rRNA binding proteins, it binds directly near the 3'-end of the 23S rRNA, where it nucleates assembly of the 50S subunit. This is Large ribosomal subunit protein uL3 from Saccharophagus degradans (strain 2-40 / ATCC 43961 / DSM 17024).